A 452-amino-acid chain; its full sequence is MGFNIAMLCDFFYPQLGGVEFHIYHLSQKLIDLGHSVVIITHAYKDRVGVRHLTNGLKVYHVPFFVIFRETTFPTVFSTFPIIRNILLREQIQIVHSHGSASTFAHEGILHANTMGLRTVFTDHSLYGFNNLTSIWVNKLLTFTLTNIDRVICVSNTCKENMIVRTELSPDIISVIPNAVVSEDFKPRDPTDSTKRKQSRDKIVIVVIGRLFPNKGSDLLTRIIPKVCSSHEDVEFIVAGDGPKFIDFQQMIESHRLQKRVQLLGSVPHEKVRDVLCQGDIYLHASLTEAFGTILVEAASCNLLIVTTQVGGIPEVLPNEMTVYAEQTSVSDLVQATNKAINIIRSKALDTSSFHDSVSKMYDWMDVAKRTVEIYTNISSTSSADDKDWMKMVANLYKRDGIWAKHLYLLCGIVEYMLFFLLEWLYPRDEIDLAPKWPKKSVSNETKEARET.

The chain crosses the membrane as a helical span at residues Leu-407–Pro-427.

This sequence belongs to the glycosyltransferase group 1 family. In terms of assembly, component of the phosphatidylinositol N-acetylglucosaminyltransferase complex composed of at least GPI1, GPI2, GPI3, GPI15, GPI19 and ERI1.

It localises to the endoplasmic reticulum membrane. It catalyses the reaction a 1,2-diacyl-sn-glycero-3-phospho-(1D-myo-inositol) + UDP-N-acetyl-alpha-D-glucosamine = a 6-(N-acetyl-alpha-D-glucosaminyl)-1-(1,2-diacyl-sn-glycero-3-phospho)-1D-myo-inositol + UDP + H(+). The protein operates within glycolipid biosynthesis; glycosylphosphatidylinositol-anchor biosynthesis. Inhibited by Ras, probably via the interaction between RAS2 and ERI1. Catalytic subunit in the complex catalyzing the transfer of N-acetylglucosamine from UDP-N-acetylglucosamine to phosphatidylinositol, the first step of GPI biosynthesis. In Saccharomyces cerevisiae (strain YJM789) (Baker's yeast), this protein is Phosphatidylinositol N-acetylglucosaminyltransferase GPI3 subunit (SPT14).